A 209-amino-acid chain; its full sequence is Guanylate kinase (209 aa).

The Guanylate kinase-like domain maps to 7-185 (GNLYIVAAPS…AAMELQSIVI (179 aa)). 14–21 (APSGGGKT) provides a ligand contact to ATP.

The protein belongs to the guanylate kinase family.

The protein resides in the cytoplasm. The enzyme catalyses GMP + ATP = GDP + ADP. Functionally, essential for recycling GMP and indirectly, cGMP. The sequence is that of Guanylate kinase from Legionella pneumophila (strain Lens).